The following is a 331-amino-acid chain: E3 ubiquitin-protein ligase Siah2 (331 aa).

The tract at residues 1–26 (MSRPSSAGGAAGGLGAGKAGGSKHGG) is disordered. Gly residues predominate over residues 9–26 (GAAGGLGAGKAGGSKHGG). An RING-type zinc finger spans residues 89–124 (CPVCFDYVLPPILQCQAGHLVCNQCRQKLSCCPTCR). Positions 139–331 (VASTLPFPCK…LGINVTISMC (193 aa)) are SBD. The segment at 142-202 (TLPFPCKYSS…VMPHLMHAHK (61 aa)) adopts an SIAH-type zinc-finger fold. 8 residues coordinate Zn(2+): Cys-147, Cys-154, His-166, Cys-170, Cys-177, Cys-184, His-196, and His-201.

The protein belongs to the SINA (Seven in absentia) family. As to quaternary structure, homodimer. In embryos it is expressed in all blastomeres starting at the mid-blastulla. After 20 somite stage, it is expressed mainly in the posterior part. Expressed in brain, including the eye, the cranial cavity, otic vesicle, optic chiasm and in the gut.

The enzyme catalyses S-ubiquitinyl-[E2 ubiquitin-conjugating enzyme]-L-cysteine + [acceptor protein]-L-lysine = [E2 ubiquitin-conjugating enzyme]-L-cysteine + N(6)-ubiquitinyl-[acceptor protein]-L-lysine.. It participates in protein modification; protein ubiquitination. Its function is as follows. E3 ubiquitin-protein ligase that mediates ubiquitination and subsequent proteasomal degradation of target proteins. E3 ubiquitin ligases accept ubiquitin from an E2 ubiquitin-conjugating enzyme in the form of a thioester and then directly transfers the ubiquitin to targeted substrates. It probably triggers the ubiquitin-mediated degradation of different substrates. Induces cellular growth arrest by inhibiting the G2/M transition. May play a role in the regulation of the cellular clock function. The chain is E3 ubiquitin-protein ligase Siah2 (siah2l) from Danio rerio (Zebrafish).